A 359-amino-acid chain; its full sequence is Type-1 angiotensin II receptor (359 aa).

The Extracellular segment spans residues 1 to 25 (MILNSSTEDSIKRIQDDCPKAGRHN). A glycan (N-linked (GlcNAc...) asparagine) is linked at asparagine 4. Glutamine 15 and aspartate 17 together coordinate angiotensin II. Disulfide bonds link cysteine 18/cysteine 274 and cysteine 101/cysteine 180. A helical transmembrane segment spans residues 26–55 (YIFVMIPTLYSIIFVVGIFGNSLVVIVIYF). Residues 56-61 (YMKLKT) are Cytoplasmic-facing. The helical transmembrane segment at 62 to 89 (VASVFLLNLALADLCFLLTLPLWAVYTA) threads the bilayer. At 90 to 98 (MEYRWPFGN) the chain is on the extracellular side. The chain crosses the membrane as a helical span at residues 99–125 (YLCKIASASVSFNLYASVFLLTCLSID). Residues 126 to 141 (RYLAIVHPMKSRLRRT) lie on the Cytoplasmic side of the membrane. A helical transmembrane segment spans residues 142-165 (MLVAKVTCIIIWLLAGLASLPTII). Residues 166–190 (HRNVFFIENTNITVCAFHYESQNST) are Extracellular-facing. Arginine 167 is a binding site for angiotensin II. Asparagine 176 carries an N-linked (GlcNAc...) asparagine glycan. Angiotensin II is bound by residues phenylalanine 182, histidine 183, and tyrosine 184. A glycan (N-linked (GlcNAc...) asparagine) is linked at asparagine 188. Residues 191–216 (LPVGLGLTKNILGFLFPFLIILTSYT) form a helical membrane-spanning segment. Position 199 (lysine 199) interacts with angiotensin II. The Cytoplasmic portion of the chain corresponds to 217 to 239 (LIWKALKKAYEIQKNKPRNDDIF). A helical transmembrane segment spans residues 240–268 (KIIMAIVLFFFFSWVPHQIFTFLDVLIQL). The Extracellular segment spans residues 269-278 (GIIHDCKIAD). Residues 279–304 (IVDTAMPITICLAYFNNCLNPLFYGF) form a helical membrane-spanning segment. Topologically, residues 305-359 (LGKKFKKYFLQLLKYIPPKAKSHSSLSTKMSTLSYRPSENGSSSTKKSAPCTEVE) are cytoplasmic. Residues 326-359 (SHSSLSTKMSTLSYRPSENGSSSTKKSAPCTEVE) are disordered. Residues 327 to 351 (HSSLSTKMSTLSYRPSENGSSSTKK) show a composition bias toward polar residues. Residue cysteine 355 is the site of S-palmitoyl cysteine attachment.

Belongs to the G-protein coupled receptor 1 family. In terms of assembly, interacts with MAS1. Interacts with ARRB1. Interacts with FLNA (via filamin repeat 21); increases PKA-mediated phosphorylation of FLNA. C-terminal Ser or Thr residues may be phosphorylated.

It localises to the cell membrane. Its function is as follows. Receptor for angiotensin II, a vasoconstricting peptide, which acts as a key regulator of blood pressure and sodium retention by the kidney. The activated receptor in turn couples to G-alpha proteins G(q) (GNAQ, GNA11, GNA14 or GNA15) and thus activates phospholipase C and increases the cytosolic Ca(2+) concentrations, which in turn triggers cellular responses such as stimulation of protein kinase C. This chain is Type-1 angiotensin II receptor (AGTR1), found in Sus scrofa (Pig).